A 398-amino-acid polypeptide reads, in one-letter code: Carbamoyl phosphate synthase small chain (398 aa).

CPSase stretches follow at residues 1–205 and 1–207; these read MTQT…TNDA and MTQT…DACN. Serine 60, glycine 257, and glycine 259 together coordinate L-glutamine. The 189-residue stretch at 209 to 397 folds into the Glutamine amidotransferase type-1 domain; that stretch reads HIVAIDYGIK…FNLIMDYKRT (189 aa). Cysteine 286 functions as the Nucleophile in the catalytic mechanism. The L-glutamine site is built by leucine 287, glutamine 290, asparagine 328, glycine 330, and phenylalanine 331. Active-site residues include histidine 370 and glutamate 372.

The protein belongs to the CarA family. In terms of assembly, composed of two chains; the small (or glutamine) chain promotes the hydrolysis of glutamine to ammonia, which is used by the large (or ammonia) chain to synthesize carbamoyl phosphate. Tetramer of heterodimers (alpha,beta)4.

The catalysed reaction is hydrogencarbonate + L-glutamine + 2 ATP + H2O = carbamoyl phosphate + L-glutamate + 2 ADP + phosphate + 2 H(+). It carries out the reaction L-glutamine + H2O = L-glutamate + NH4(+). The protein operates within amino-acid biosynthesis; L-arginine biosynthesis; carbamoyl phosphate from bicarbonate: step 1/1. It functions in the pathway pyrimidine metabolism; UMP biosynthesis via de novo pathway; (S)-dihydroorotate from bicarbonate: step 1/3. Its function is as follows. Small subunit of the glutamine-dependent carbamoyl phosphate synthetase (CPSase). CPSase catalyzes the formation of carbamoyl phosphate from the ammonia moiety of glutamine, carbonate, and phosphate donated by ATP, constituting the first step of 2 biosynthetic pathways, one leading to arginine and/or urea and the other to pyrimidine nucleotides. The small subunit (glutamine amidotransferase) binds and cleaves glutamine to supply the large subunit with the substrate ammonia. This is Carbamoyl phosphate synthase small chain from Bartonella quintana (strain Toulouse) (Rochalimaea quintana).